Reading from the N-terminus, the 414-residue chain is Probable peptidoglycan glycosyltransferase FtsW (414 aa).

Residues 1–12 (MRLSLPRLKMPR) are Cytoplasmic-facing. Residues 13-33 (LPGFSILVWISTALKGWVMGS) traverse the membrane as a helical segment. The Periplasmic portion of the chain corresponds to 34–47 (REKDTDSLIMYDRT). Residues 48–68 (LLWLTFGLAAIGFIMVTSASM) traverse the membrane as a helical segment. Residues 69-86 (PIGQRLTNDPFFFAKRDG) lie on the Cytoplasmic side of the membrane. A helical transmembrane segment spans residues 87–107 (VYLILAFILAIITLRLPMEFW). The Periplasmic portion of the chain corresponds to 108–111 (QRYS). The chain crosses the membrane as a helical span at residues 112-132 (ATMLLGSIILLMIVLVVGSSV). Residues 133 to 174 (KGASRWIDLGLLRIQPAELTKLSLFCYIANYLVRKGDEVRNN) are Cytoplasmic-facing. Residues 175 to 194 (LRGFLKPMGVILVLAVLLLA) traverse the membrane as a helical segment. Residues 195–197 (QPD) are Periplasmic-facing. Residues 198–217 (LGTVVVLFVTTLAMLFLAGA) traverse the membrane as a helical segment. Residue Lys218 is a topological domain, cytoplasmic. The helical transmembrane segment at 219-239 (LWQFIAIIGMGISAVVLLILA) threads the bilayer. The Periplasmic segment spans residues 240-301 (EPYRIRRVTA…PEAHTDFIFA (62 aa)). A helical membrane pass occupies residues 302–322 (IIGEELGYVGVVLALLMVFFV). Residues 323 to 342 (AFRAMSIGRKALEIDHRFSG) lie on the Cytoplasmic side of the membrane. The helical transmembrane segment at 343–363 (FLACSIGIWFSFQALVNVGAA) threads the bilayer. At 364-373 (AGMLPTKGLT) the chain is on the periplasmic side. A helical membrane pass occupies residues 374-394 (LPLISYGGSSLLIMSTAIMML). The Cytoplasmic portion of the chain corresponds to 395 to 414 (LRIDYETRLEKAQAFVRGSR).

This sequence belongs to the SEDS family. FtsW subfamily.

The protein resides in the cell inner membrane. It catalyses the reaction [GlcNAc-(1-&gt;4)-Mur2Ac(oyl-L-Ala-gamma-D-Glu-L-Lys-D-Ala-D-Ala)](n)-di-trans,octa-cis-undecaprenyl diphosphate + beta-D-GlcNAc-(1-&gt;4)-Mur2Ac(oyl-L-Ala-gamma-D-Glu-L-Lys-D-Ala-D-Ala)-di-trans,octa-cis-undecaprenyl diphosphate = [GlcNAc-(1-&gt;4)-Mur2Ac(oyl-L-Ala-gamma-D-Glu-L-Lys-D-Ala-D-Ala)](n+1)-di-trans,octa-cis-undecaprenyl diphosphate + di-trans,octa-cis-undecaprenyl diphosphate + H(+). Its pathway is cell wall biogenesis; peptidoglycan biosynthesis. Its function is as follows. Peptidoglycan polymerase that is essential for cell division. The chain is Probable peptidoglycan glycosyltransferase FtsW from Escherichia coli O157:H7.